The chain runs to 311 residues: Progestin and adipoQ receptor family member 3 (311 aa).

The interval 1–20 (MHQKLLKSAHYIELGSYQYW) is required for interaction with SREBF2. The Cytoplasmic segment spans residues 1 to 73 (MHQKLLKSAH…FILSNETVNI (73 aa)). The tract at residues 41–60 (KDNPYITDGYRAYLPSRLCI) is required for interaction with SCAP. The segment at 61 to 71 (KSLFILSNETV) is golgi targeting. A helical membrane pass occupies residues 74–96 (WSHLLGFFLFFTLGIYDMTSVLP). Residues 97 to 105 (SASASREDF) lie on the Lumenal side of the membrane. The helical transmembrane segment at 106–128 (VICSICLFCFQVCMLCSVGYHLF) threads the bilayer. Topologically, residues 129–140 (SCHRSEKTCRRW) are cytoplasmic. The helical transmembrane segment at 141-163 (MALDYAGISIGILGCYVSGVFYA) threads the bilayer. Residues 164 to 172 (FYCNNYWRQ) lie on the Lumenal side of the membrane. The helical transmembrane segment at 173 to 195 (VYLITVLAMILAVFFAQIHPNYL) threads the bilayer. Residues 196–201 (TQQWQR) lie on the Cytoplasmic side of the membrane. A helical transmembrane segment spans residues 202-224 (LRSIIFCSVSGYGVIPTLHWVWL). The Lumenal portion of the chain corresponds to 225-238 (NGGIGAPIVQDFAP). Residues 239–256 (RVIVMYMIALLAFLFYIS) form a helical membrane-spanning segment. Residues 257–275 (KVPERYFPGQLNYLGSSHQ) lie on the Cytoplasmic side of the membrane. The helical transmembrane segment at 276 to 298 (IWHILAVVMLYWWHQSTVYVMQY) threads the bilayer. Residues 299–303 (RHSKP) form a golgi targeting region. Over 299–311 (RHSKPCPDYVSHL) the chain is Lumenal.

It belongs to the ADIPOR family. In terms of assembly, interacts with SCAP and SREBF2; the interactions are direct, increase in low cholesterol conditions and tether SCAP:SREBP complex to the Golgi apparatus. Interaction with SCAP is mutually exclusive with INSIG1. In hepatocytes, interacts with PPARA and HUWE1; the interactions promote PPARA poylubiquitination and HUWE1-mediated degradation. In macrophages, interacts with PPARG and STUB1; the interactions promote PPARG poylubiquitination and STUB1-mediated degradation. Widely expressed in a range of tissues.

Its subcellular location is the golgi apparatus membrane. Functionally, golgi-scaffold protein which modulates its interactors acitivies by anchoring them to the Golgi apparatus. Functions as a spatial regulator of RAF1 kinase by sequestrating it to the Golgi apparatus. Acts as a positive regulator of cholesterol biosynthesis by mediating the anchoring of the SCAP:SREBP complex in the Golgi apparatus, thereby promoting SCAP:SREBF2 complex formation, potentiating SREBF2 and SREBF1 processing and enhancing lipid synthesis. Also regulates PPARA and PPARG functions by mediating their interaction with E3 ubiquitin ligases, such as STUB1 or HUWE1, leading to their polyubiquitination and proteasome-mediated degradation. This Homo sapiens (Human) protein is Progestin and adipoQ receptor family member 3.